A 611-amino-acid chain; its full sequence is Angiotensin-converting enzyme (611 aa).

The first 17 residues, 1–17 (MKLLVVTILAGLAVCHG), serve as a signal peptide directing secretion. The Peptidase M2 domain occupies 19–607 (TKEEIVATEY…VESLCHQRYK (589 aa)). Asn53 is a glycosylation site (N-linked (GlcNAc...) asparagine). Cys133 and Cys141 are oxidised to a cystine. An N-linked (GlcNAc...) asparagine glycan is attached at Asn196. Residues Cys336 and Cys354 are joined by a disulfide bond. His367 provides a ligand contact to Zn(2+). Glu368 functions as the Proton acceptor in the catalytic mechanism. Zn(2+) is bound by residues His371 and Glu395. His497 serves as the catalytic Proton donor. Cys522 and Cys540 are disulfide-bonded. An N-linked (GlcNAc...) asparagine glycan is attached at Asn531.

It belongs to the peptidase M2 family. The cofactor is Zn(2+). In terms of tissue distribution, expressed in the compound ganglion and in the posterior region of the midgut.

Its subcellular location is the secreted. The protein resides in the extracellular space. It carries out the reaction Release of a C-terminal dipeptide, oligopeptide-|-Xaa-Yaa, when Xaa is not Pro, and Yaa is neither Asp nor Glu. Thus, conversion of angiotensin I to angiotensin II, with increase in vasoconstrictor activity, but no action on angiotensin II.. Its function is as follows. Involved in the specific maturation or degradation of a number of bioactive peptides. The chain is Angiotensin-converting enzyme (ACE) from Haematobia irritans exigua (Buffalo fly).